The chain runs to 205 residues: Outer-membrane lipoprotein carrier protein (205 aa).

The first 22 residues, 1 to 22 (MKKTTLKFAALTLLGLSNLALA), serve as a signal peptide directing secretion.

It belongs to the LolA family. In terms of assembly, monomer.

It localises to the periplasm. Functionally, participates in the translocation of lipoproteins from the inner membrane to the outer membrane. Only forms a complex with a lipoprotein if the residue after the N-terminal Cys is not an aspartate (The Asp acts as a targeting signal to indicate that the lipoprotein should stay in the inner membrane). This Haemophilus influenzae (strain PittEE) protein is Outer-membrane lipoprotein carrier protein.